Consider the following 266-residue polypeptide: Apolipoprotein A-I (266 aa).

The signal sequence occupies residues 1-18 (MKAVVLTLAVLFLTGSQA). A run of 2 repeats spans residues 67 to 88 (LKLL…EQIG) and 89 to 110 (PVTQ…QEMN). The segment at 67-266 (LKLLDNWDSL…DEATKKLNSQ (200 aa)) is 10 X approximate tandem repeats. Residue methionine 109 is modified to Methionine sulfoxide. Residues 111 to 121 (KDLEEVKKKVQ) form a 3; half-length repeat. A run of 5 repeats spans residues 122-143 (PYLD…QKVA), 144-165 (PLGA…EKLS), 166-187 (PLGE…AQLA), 188-209 (PYGE…EGGG), and 210-231 (AALT…EKAK). Residues 232 to 242 (PALEDLRQGLL) form a 9; half-length repeat. Copy 10 of the repeat occupies 243 to 266 (PVLENFRVSLLAAVDEATKKLNSQ).

Belongs to the apolipoprotein A1/A4/E family. As to quaternary structure, homodimer. Interacts with APOA1BP and CLU. Component of a sperm activating protein complex (SPAP), consisting of APOA1, an immunoglobulin heavy chain, an immunoglobulin light chain and albumin. Interacts with NDRG1. Interacts with SCGB3A2. Interacts with NAXE and YJEFN3. Post-translationally, glycosylated. In terms of processing, palmitoylated. Phosphorylation sites are present in the extracellular medium.

The protein resides in the secreted. Participates in the reverse transport of cholesterol from tissues to the liver for excretion by promoting cholesterol efflux from tissues and by acting as a cofactor for the lecithin cholesterol acyltransferase (LCAT). As part of the SPAP complex, activates spermatozoa motility. The protein is Apolipoprotein A-I (APOA1) of Leptonychotes weddellii (Weddell seal).